The chain runs to 227 residues: Mitochondrial inner membrane protease ATP23 (227 aa).

His129 contacts a divalent metal cation. Glu130 is a catalytic residue. His133 serves as a coordination point for a divalent metal cation.

The protein belongs to the peptidase M76 family.

It is found in the mitochondrion inner membrane. Has a dual role in the assembly of mitochondrial ATPase. Acts as a protease that removes N-terminal residues of mitochondrial ATPase CF(0) subunit 6 at the intermembrane space side. Also involved in the correct assembly of the membrane-embedded ATPase CF(0) particle, probably mediating association of subunit 6 with the subunit 9 ring. This Cryptococcus neoformans var. neoformans serotype D (strain B-3501A) (Filobasidiella neoformans) protein is Mitochondrial inner membrane protease ATP23 (ATP23).